Reading from the N-terminus, the 507-residue chain is Phosphoprotein (507 aa).

Residues 56 to 79 (DHQDISKPCFPAAGPGKSSMSRCH) form a disordered region. S86 and S151 each carry phosphoserine. Residues 137 to 160 (DGVEVWGGDEESENSDVDSGEPDP) show a composition bias toward acidic residues. Residues 137-307 (DGVEVWGGDE…QSNIEPEDDY (171 aa)) form a disordered region. Composition is skewed to basic and acidic residues over residues 189–199 (EIQKLLEDQSR) and 222–233 (TASEKPIKKGTD). Low complexity-rich tracts occupy residues 236-252 (STSSGTMAESSSTGGAT) and 266-278 (NASAENALASASN). The span at 279 to 301 (VSPTQGSKTESGTTTSRISQSNI) shows a compositional bias: polar residues. The interval 304-376 (EDDYDDELFS…LSSFMIAIPG (73 aa)) is multimerization. The tract at residues 459–507 (ASRSVIRSIIKSSHLGEDRKDYLMSLLNDIQGSKDLAQFHQMLVKILKN) is interaction with the nucleocapsid (N-RNA).

This sequence belongs to the morbillivirus P protein family. As to quaternary structure, homotetramer. Interacts (via multimerization domain) with polymerase L; this interaction forms the polymerase L-P complex. Interacts (via N-terminus) with N0 (via Ncore); this interaction allows P to chaperon N0 to avoid N polymerization before encapsidation. Interacts (via C-terminus) with N-RNA template; this interaction positions the polymerase on the template for both transcription and replication. Phosphorylation on serines by host CK2 is necessary for the formation of viral factories.

Essential cofactor of the RNA polymerase L that plays a central role in the transcription and replication by forming the polymerase complex with RNA polymerase L and recruiting L to the genomic N-RNA template for RNA synthesis. Also plays a central role in the encapsidation of nascent RNA chains by forming the encapsidation complex with the nucleocapsid protein N (N-P complex). Acts as a chaperone for newly synthesized free N protein, so-called N0, allowing encapsidation of nascent RNA chains during replication. The nucleoprotein protein N prevents excessive phosphorylation of P, which leads to down-regulation of viral transcription/ replication. Participates, together with N, in the formation of viral factories (viroplasms), which are large inclusions in the host cytoplasm where replication takes place. The sequence is that of Phosphoprotein (P/V) from Bos indicus (Zebu).